The chain runs to 200 residues: Recombination protein RecR (200 aa).

Residues 57–72 form a C4-type zinc finger; the sequence is CNECRTFTEEDVCHIC. The 96-residue stretch at 81 to 176 folds into the Toprim domain; it reads GLLCVVESPA…DASRIAHGVP (96 aa).

This sequence belongs to the RecR family.

Functionally, may play a role in DNA repair. It seems to be involved in an RecBC-independent recombinational process of DNA repair. It may act with RecF and RecO. The polypeptide is Recombination protein RecR (Vibrio vulnificus (strain CMCP6)).